We begin with the raw amino-acid sequence, 180 residues long: NEDD8-conjugating enzyme ubc-12 (180 aa).

A UBC core domain is found at valine 24 to cysteine 180. The active-site Glycyl thioester intermediate is the cysteine 112.

It belongs to the ubiquitin-conjugating enzyme family. UBC12 subfamily.

Its subcellular location is the cytoplasm. The enzyme catalyses [E1 NEDD8-activating enzyme]-S-[NEDD8 protein]-yl-L-cysteine + [E2 NEDD8-conjugating enzyme]-L-cysteine = [E1 NEDD8-activating enzyme]-L-cysteine + [E2 NEDD8-conjugating enzyme]-S-[NEDD8-protein]-yl-L-cysteine.. Its pathway is protein modification; protein neddylation. Its function is as follows. Accepts the ubiquitin-like protein NEDD8 from the uba-3-ula-1 E1 complex and catalyzes its covalent attachment to other proteins. Plays a role in male tail tip morphogenesis. This Caenorhabditis elegans protein is NEDD8-conjugating enzyme ubc-12.